The following is a 457-amino-acid chain: Glucuronide carrier protein homolog (457 aa).

Topologically, residues 1-11 are cytoplasmic; it reads MNQQLSWRTIV. A helical transmembrane segment spans residues 12-34; sequence GYSLGDVANNFAFAMGALFLLSY. Topologically, residues 35 to 37 are periplasmic; the sequence is YTD. A helical transmembrane segment spans residues 38–60; that stretch reads VAGVGAAAAGTMLLLVRVFDAFA. Over 61-79 the chain is Cytoplasmic; the sequence is DVFAGRVVDSVNTRWGKFR. Residues 80 to 100 form a helical membrane-spanning segment; that stretch reads PFLLFGTAPLMIFSVLVFWVL. Over 101-108 the chain is Periplasmic; sequence TDWSHGSK. A helical membrane pass occupies residues 109–129; sequence VVYAYLTYMGLGLCYSLVNIP. Over 130 to 146 the chain is Cytoplasmic; the sequence is YGSLATAMTQQPQSRAR. The helical transmembrane segment at 147-167 threads the bilayer; sequence LGAARGIAASLTFVCLAFLIG. Topologically, residues 168 to 180 are periplasmic; sequence PSIKNSSPEEMVS. A helical transmembrane segment spans residues 181–201; that stretch reads VYHFWTIVLAIAGMVLYFICF. The Cytoplasmic portion of the chain corresponds to 202-228; that stretch reads KSTRENVVRIVAQPSLNISLQTLKRNR. Residues 229-249 traverse the membrane as a helical segment; the sequence is PLFMLCIGALCVLISTFAVSA. Residues 250–263 lie on the Periplasmic side of the membrane; the sequence is SSLFYVRYVLNDTG. The chain crosses the membrane as a helical span at residues 264-284; sequence LFTVLVLVQNLVGTVASAPLV. Over 285–296 the chain is Cytoplasmic; the sequence is PGMVARIGKKNT. A helical transmembrane segment spans residues 297–316; sequence FLIGALLGTCGYLLFFWVSV. The Periplasmic segment spans residues 317–320; that stretch reads WSLP. Residues 321–343 form a helical membrane-spanning segment; sequence VALVALAIASIGQGVTMTVMWAL. Residues 344 to 372 are Cytoplasmic-facing; that stretch reads EADTVEYGEYLTGVRIEGLTYSLFSFTRK. A helical transmembrane segment spans residues 373-393; the sequence is CGQAIGGSIPAFILGLSGYIA. Residues 394–408 lie on the Periplasmic side of the membrane; the sequence is NQVQTPEVIMGIRTS. A helical membrane pass occupies residues 409–429; sequence IALVPCGFMLLAFVIIWFYPL. Over 430 to 457 the chain is Cytoplasmic; sequence TDKKFKEIVVEIDNRKKVQQQLISDITN.

It belongs to the sodium:galactoside symporter (TC 2.A.2) family.

The protein resides in the cell inner membrane. This Escherichia coli (strain K12) protein is Glucuronide carrier protein homolog (uidB).